Reading from the N-terminus, the 358-residue chain is Dihydroorotate dehydrogenase (quinone) (358 aa).

Residues Ala61–Lys65 and Gly85 each bind FMN. Lys65 provides a ligand contact to substrate. Asn110–Leu114 serves as a coordination point for substrate. Asn139 and Asn170 together coordinate FMN. Asn170 serves as a coordination point for substrate. The active-site Nucleophile is the Ser173. Asn175 serves as a coordination point for substrate. FMN-binding residues include Lys211 and Ser239. Position 240 to 241 (Asn240 to Thr241) interacts with substrate. FMN contacts are provided by residues Gly263, Gly292, and Tyr313–Ser314.

Belongs to the dihydroorotate dehydrogenase family. Type 2 subfamily. Monomer. The cofactor is FMN.

The protein localises to the cell membrane. The enzyme catalyses (S)-dihydroorotate + a quinone = orotate + a quinol. It participates in pyrimidine metabolism; UMP biosynthesis via de novo pathway; orotate from (S)-dihydroorotate (quinone route): step 1/1. In terms of biological role, catalyzes the conversion of dihydroorotate to orotate with quinone as electron acceptor. The protein is Dihydroorotate dehydrogenase (quinone) of Methylorubrum extorquens (strain CM4 / NCIMB 13688) (Methylobacterium extorquens).